A 1055-amino-acid polypeptide reads, in one-letter code: Inactive exonuclease DIS3L2 (1055 aa).

Disordered regions lie at residues 1-109 (MKSA…SSPE) and 229-249 (SAAK…KARQ). Residues 17 to 32 (HKKKRNRPQKQNRRSK) are compositionally biased toward basic residues. Basic and acidic residues predominate over residues 39–59 (EDAHVEESLDGRDSSRSKAKD). Residues 97–108 (PRRSASPLLSSP) show a composition bias toward low complexity. A CSD2 domain is found at 367 to 446 (YVQLMPADPR…PQINAILYQN (80 aa)). An RNB domain is found at 476–824 (RKDLRDLCVL…VHRALAAALE (349 aa)). Mg(2+) is bound by residues aspartate 488 and aspartate 497.

The protein belongs to the RNR ribonuclease family. DIS3L2 subfamily.

The protein resides in the cytoplasm. In terms of biological role, probable inactive 3'-5'-exoribonuclease. Is unable to complement the growth defect of a yeast mutant lacking RRP44 exonuclease. The chain is Inactive exonuclease DIS3L2 from Arabidopsis thaliana (Mouse-ear cress).